A 166-amino-acid chain; its full sequence is uncharacterized protein (166 aa).

Pentapeptide repeat domains follow at residues 38-77 (GECL…NLRR), 78-117 (ALLD…NLER), and 118-157 (SFLR…EFWE).

This is an uncharacterized protein from Synechocystis sp. (strain ATCC 27184 / PCC 6803 / Kazusa).